The chain runs to 355 residues: MLDRLQAVENRYEKLNELLSDPAIISDSNKLREYSKEQSDIQETVEVYREYKDVREQLKDAKAMLEDKLDAEMREMVKEEVSELESQDKTLSERLKILLVPKDPNDDKNVIVEVRGAAGGDEAALFAGDLYRMYSRYAEVQGWKTEIIEASYTELGGYKEIIFMINGKGAFAKLKFENGAHRVQRVPETESGGRIHTSTATVAVLPEAEEVEIDIHEKDVRVDTFASSGPGGQSVNTTMSAVRLTHLPTGVVVSCQDEKSQIKNKEKAMKVLRARVYDKFRQEAQAEYDQNRKQAVGTGDRSERIRTYNFPQNRVTDHRIGLTIQKLDQILQGKLDDFINALVMEDQAQKMEAAE.

An N5-methylglutamine modification is found at glutamine 233.

This sequence belongs to the prokaryotic/mitochondrial release factor family. Methylated by PrmC. Methylation increases the termination efficiency of RF1.

The protein resides in the cytoplasm. Its function is as follows. Peptide chain release factor 1 directs the termination of translation in response to the peptide chain termination codons UAG and UAA. This Bacillus cereus (strain ATCC 14579 / DSM 31 / CCUG 7414 / JCM 2152 / NBRC 15305 / NCIMB 9373 / NCTC 2599 / NRRL B-3711) protein is Peptide chain release factor 1.